Reading from the N-terminus, the 142-residue chain is Large ribosomal subunit protein uL23 (142 aa).

A Glycyl lysine isopeptide (Lys-Gly) (interchain with G-Cter in SUMO) cross-link involves residue lysine 61.

This sequence belongs to the universal ribosomal protein uL23 family. As to quaternary structure, component of the large ribosomal subunit (LSU). Mature yeast ribosomes consist of a small (40S) and a large (60S) subunit. The 40S small subunit contains 1 molecule of ribosomal RNA (18S rRNA) and 33 different proteins (encoded by 57 genes). The large 60S subunit contains 3 rRNA molecules (25S, 5.8S and 5S rRNA) and 46 different proteins (encoded by 81 genes). uL23 is associated with the polypeptide exit tunnel.

The protein resides in the cytoplasm. Functionally, component of the ribosome, a large ribonucleoprotein complex responsible for the synthesis of proteins in the cell. The small ribosomal subunit (SSU) binds messenger RNAs (mRNAs) and translates the encoded message by selecting cognate aminoacyl-transfer RNA (tRNA) molecules. The large subunit (LSU) contains the ribosomal catalytic site termed the peptidyl transferase center (PTC), which catalyzes the formation of peptide bonds, thereby polymerizing the amino acids delivered by tRNAs into a polypeptide chain. The nascent polypeptides leave the ribosome through a tunnel in the LSU and interact with protein factors that function in enzymatic processing, targeting, and the membrane insertion of nascent chains at the exit of the ribosomal tunnel. uL23 is a major component of the universal docking site for these factors at the polypeptide exit tunnel. In Saccharomyces cerevisiae (strain ATCC 204508 / S288c) (Baker's yeast), this protein is Large ribosomal subunit protein uL23.